We begin with the raw amino-acid sequence, 314 residues long: Dihydroorotate dehydrogenase (fumarate) (314 aa).

Substrate contacts are provided by residues lysine 46, 70 to 74, and asparagine 130; that span reads NSMGL. Lysine 46 is covalently cross-linked (Glycyl lysine isopeptide (Lys-Gly) (interchain with G-Cter in ubiquitin)). An FMN-binding site is contributed by 46–47; the sequence is KS. FMN is bound at residue asparagine 130. Cysteine 133 acts as the Nucleophile in catalysis. The FMN site is built by lysine 167 and isoleucine 195. Substrate is bound at residue 196-197; the sequence is NS. Residues glycine 224, 252-253, and 274-275 contribute to the FMN site; these read GG and GT.

It belongs to the dihydroorotate dehydrogenase family. Type 1 subfamily. In terms of assembly, homodimer. Requires FMN as cofactor.

It is found in the cytoplasm. It catalyses the reaction (S)-dihydroorotate + fumarate = orotate + succinate. Its pathway is pyrimidine metabolism; UMP biosynthesis via de novo pathway. With respect to regulation, the activity is independent of the presence of oxygen. Functionally, catalyzes the conversion of dihydroorotate to orotate with fumarate as the electron acceptor. Molecular oxygen can replace fumarate in vitro. Does not use oxaloacetate or NAD or NADP as electron acceptors. In Saccharomyces cerevisiae (strain ATCC 204508 / S288c) (Baker's yeast), this protein is Dihydroorotate dehydrogenase (fumarate) (URA1).